The following is a 462-amino-acid chain: Cytochrome P450 20A1 (462 aa).

Residues 4-24 (FAIFAVTFLLALVGAVLYLYP) form a helical membrane-spanning segment. Heme is bound at residue Cys409.

This sequence belongs to the cytochrome P450 family. Requires heme as cofactor.

It is found in the membrane. This is Cytochrome P450 20A1 (CYP20A1) from Bos taurus (Bovine).